Reading from the N-terminus, the 89-residue chain is Large ribosomal subunit protein bL27 (89 aa).

The disordered stretch occupies residues Met1 to Arg20.

It belongs to the bacterial ribosomal protein bL27 family.

In Paramagnetospirillum magneticum (strain ATCC 700264 / AMB-1) (Magnetospirillum magneticum), this protein is Large ribosomal subunit protein bL27.